The primary structure comprises 554 residues: 3-(3-hydroxy-phenyl)propionate/3-hydroxycinnamic acid hydroxylase (554 aa).

FAD is bound by residues 17–46 and 285–295; these read QVAI…LVEK and FRIDRVLLAGD.

Belongs to the PheA/TfdB FAD monooxygenase family. The cofactor is FAD.

It catalyses the reaction 3-(3-hydroxyphenyl)propanoate + NADH + O2 + H(+) = 3-(2,3-dihydroxyphenyl)propanoate + NAD(+) + H2O. The catalysed reaction is (2E)-3-(3-hydroxyphenyl)prop-2-enoate + NADH + O2 + H(+) = (2E)-3-(2,3-dihydroxyphenyl)prop-2-enoate + NAD(+) + H2O. It functions in the pathway aromatic compound metabolism; 3-phenylpropanoate degradation. In terms of biological role, catalyzes the insertion of one atom of molecular oxygen into position 2 of the phenyl ring of 3-(3-hydroxyphenyl)propionate (3-HPP) and hydroxycinnamic acid (3HCI). The sequence is that of 3-(3-hydroxy-phenyl)propionate/3-hydroxycinnamic acid hydroxylase from Klebsiella pneumoniae (strain 342).